Reading from the N-terminus, the 649-residue chain is Exolysin (649 aa).

The chain crosses the membrane as a helical span at residues 37–57 (LIYTIIVLVVAAVVGLVIFIV). Residues 184–268 (KDIIDNKLRE…KKATDDFKKK (85 aa)) adopt a coiled-coil conformation. Over residues 258–275 (AKKATDDFKKKKQADKNK) the composition is skewed to basic and acidic residues. The tract at residues 258 to 325 (AKKATDDFKK…QFQTRDSKGQ (68 aa)) is disordered. Pro residues predominate over residues 278 to 312 (ASKPSPGPKPAPKPSPGPKPAPKPSPGPKPSPGPS). Residues 407 to 649 (GGGGGGGNVS…KNVKISKWSP (243 aa)) form a catalytic region.

It depends on Ca(2+) as a cofactor. The cofactor is Mg(2+).

Its subcellular location is the membrane. It localises to the virion. Inhibited by Mn(2+), Cu(2+), Co(2+), Fe(2+), Zn(2+), Ni(2+), EDTA and EGTA. Its function is as follows. During viral entry, involved in the degradation of the host cell wall at the site of attachment. This chain is Exolysin, found in Chlorella (PBCV-1).